The following is a 188-amino-acid chain: Peptidyl-tRNA hydrolase (188 aa).

Phe-14 contributes to the tRNA binding site. Residue His-19 is the Proton acceptor of the active site. Tyr-64, Asn-66, and Asn-112 together coordinate tRNA.

It belongs to the PTH family. In terms of assembly, monomer.

It is found in the cytoplasm. It carries out the reaction an N-acyl-L-alpha-aminoacyl-tRNA + H2O = an N-acyl-L-amino acid + a tRNA + H(+). Functionally, hydrolyzes ribosome-free peptidyl-tRNAs (with 1 or more amino acids incorporated), which drop off the ribosome during protein synthesis, or as a result of ribosome stalling. Its function is as follows. Catalyzes the release of premature peptidyl moieties from peptidyl-tRNA molecules trapped in stalled 50S ribosomal subunits, and thus maintains levels of free tRNAs and 50S ribosomes. The polypeptide is Peptidyl-tRNA hydrolase (Onion yellows phytoplasma (strain OY-M)).